Here is a 119-residue protein sequence, read N- to C-terminus: Ribosome-binding factor A (119 aa).

The protein belongs to the RbfA family. Monomer. Binds 30S ribosomal subunits, but not 50S ribosomal subunits or 70S ribosomes.

Its subcellular location is the cytoplasm. One of several proteins that assist in the late maturation steps of the functional core of the 30S ribosomal subunit. Associates with free 30S ribosomal subunits (but not with 30S subunits that are part of 70S ribosomes or polysomes). Required for efficient processing of 16S rRNA. May interact with the 5'-terminal helix region of 16S rRNA. The protein is Ribosome-binding factor A of Citrifermentans bemidjiense (strain ATCC BAA-1014 / DSM 16622 / JCM 12645 / Bem) (Geobacter bemidjiensis).